Consider the following 494-residue polypeptide: Uric acid degradation bifunctional protein PucL (494 aa).

The tract at residues M1–T174 is OHCU decarboxylase. H68 serves as the catalytic Proton donor; for OHCU decarboxylase activity. 5-hydroxy-2-oxo-4-ureido-2,5-dihydro-1H-imidazole-5-carboxylate-binding positions include P69, S81–Q85, and F116–V120. Residues M175–A494 are urate oxidase. K179 serves as the catalytic Charge relay system; for urate oxidase activity. Catalysis depends on K190, which acts as the Charge relay system. T239 functions as the Charge relay system; for urate oxidase activity in the catalytic mechanism. Urate-binding residues include T239, D240, F349, R366, I414, Q415, and N441.

This sequence in the N-terminal section; belongs to the OHCU decarboxylase family. In the C-terminal section; belongs to the uricase family.

The catalysed reaction is 5-hydroxy-2-oxo-4-ureido-2,5-dihydro-1H-imidazole-5-carboxylate + H(+) = (S)-allantoin + CO2. It carries out the reaction urate + O2 + H2O = 5-hydroxyisourate + H2O2. The protein operates within purine metabolism; urate degradation; (S)-allantoin from urate: step 1/3. It participates in purine metabolism; urate degradation; (S)-allantoin from urate: step 3/3. Its function is as follows. Catalyzes two steps in the degradation of uric acid, i.e. the oxidation of uric acid to 5-hydroxyisourate (HIU) and the stereoselective decarboxylation of 2-oxo-4-hydroxy-4-carboxy-5-ureidoimidazoline (OHCU) to (S)-allantoin. The polypeptide is Uric acid degradation bifunctional protein PucL (pucL) (Bacillus subtilis (strain 168)).